The chain runs to 146 residues: Large ribosomal subunit protein uL15 (146 aa).

Basic and acidic residues predominate over residues 1-13; the sequence is MKLNELKPNEGSR. The interval 1–54 is disordered; it reads MKLNELKPNEGSRRNRKRVGRGTSSGYGKTAGRGQKGQLARTGGKTRLGFEGGQ. The span at 23–35 shows a compositional bias: gly residues; that stretch reads TSSGYGKTAGRGQ.

This sequence belongs to the universal ribosomal protein uL15 family. Part of the 50S ribosomal subunit.

Its function is as follows. Binds to the 23S rRNA. The chain is Large ribosomal subunit protein uL15 from Lactobacillus gasseri (strain ATCC 33323 / DSM 20243 / BCRC 14619 / CIP 102991 / JCM 1131 / KCTC 3163 / NCIMB 11718 / NCTC 13722 / AM63).